The following is a 382-amino-acid chain: MKALHFGAGNIGRGFIGKLLADAGIQLTFADVNQVVLDALNARHSYQVHVVGETEQVDTVSGVDAVSSIGDDVVDLIAQVDLVTTAVGPVVLERIAPAIAKGLVKRKEQGNESPLNIIACENMVRGTTQLKGHVMNALPEDAKAWVEEHVGFVDSAVDRIVPPSASATNDPLEVTVETFSEWIVDKTQFKGTLPNIPGMELTDNLMAFVERKLFTLNTGHAITAYLGKLAGHQTIRDAILDEKIRAVVKGAMEESGAVLIKRYDFDADKHAAYIQKILGRFENPYLKDDVERVGRQPLRKLSAGDRLIKPLLGTLEYGLPHKNLIEGIAAAMHFRSEDDPQAQELAALIADKGPQAALAQISGLDANSEVVSEAVTAYKAMQ.

3-14 contacts NAD(+); it reads ALHFGAGNIGRG. Lys269 carries the N6-acetyllysine modification.

This sequence belongs to the mannitol dehydrogenase family.

It carries out the reaction D-mannitol 1-phosphate + NAD(+) = beta-D-fructose 6-phosphate + NADH + H(+). In Escherichia coli O45:K1 (strain S88 / ExPEC), this protein is Mannitol-1-phosphate 5-dehydrogenase.